The chain runs to 1193 residues: MASAGTEHYSIGLRRGNSFKQRHPSGTVSASPSEKPSEVKVWSQAHQQVKPIWKLEKKHVGTLSAGLGTSFLGVPSQPAYFLCPSTLCSSGTTAVIAGHSNPCYLQSLPNLFSNTLLYRRTNVRQKPYQQLESFCLRSSPSEKRSFSLPQKGLPVSVTANKATSSTVFPMAQPMATSPTDPYLSLAAAGENPSRKSLASAISGKIASPLSYKPMLNNNSFMRPNSTKVPLSQATDGLKPVSSPKIQPVSWHHSGGTGDCVPQPGDHKVPQNIATVLDDVTAPITPSIPSTLNISTASVTSSQCSQSNFRMEAHPCGLDENPDSQSATKEVHFTEAVRKLAEKGLEKMPRQGYQFEQACFVNPSFQWGLLNRSRRWKPLMGQRFPQEDIGLDSAILPGTSDTLGLDSTVFCTKRISIHLLASHVHGLNPSPACGSAVDPQVLGEDRAPVPPSSLQPLGVAEVATRLSSVHLDQPGKEPEEAKDLNSCTKGGGSATDLQPNQVEPEDTEDELGDGLEDSCSHDENEEEEGDSECSSLSVVSPSESVALISRNCVDLMSKSLPNHEKVVRPALIYSLFPNVTPTIYFGTRDERVEKLPWEQRRLLRWKMSTVTPNIVKQTIGRSHFKISKRNDDWLGCWGHHMKSPGFRSIREHQKLNHFPGSFQIGRKDRLWRNLSRMQSRFGKKEFSFFPQSFILPQDSKLLRKAWESSSRQKWIVKPPASARGIGIQVIHKWSQLPKRRPLLVQRYLHKPYLISGSKFDLRIYVYVTSYDPLRIYLFSDGLVRFASCKYSPSMKSLSNKFMHLTNYSVNKKNTEYQANADETACQGHKWALKALWNYLSQKGINSDAIWEKIKDVVVKTIISSEPYVTNLLKLYVRRPYSCHELFGFDIMLDENLKPWVLEVNISPSLHSNSPLDISIKGQMIRDLLNLAGFVLPNMEDIISSSSSPSSSSGSSTSLPSSPRDKCQMTPEHFTAQKMKKAYYLTQKIPDQDFYASVLDVLTPDDVRVLVEMEDEFSRRGQFERIFPSRISSRYLRFFEQPRYFNILTTQWEQKYHGNKLKGVDLLRNWCYKGFHTGIVSDSAPLWSLPTSLMTTSKGDGTPNSASKSRKKSASEGTTLSSEDRSTPKSKKSQAGLSPISRKTLSSRSNENTSKQSKRSTPGLPVLKYSGQSSRLSAASASQSVTDSRLTAVSS.

Disordered regions lie at residues 1-37 (MASAGTEHYSIGLRRGNSFKQRHPSGTVSASPSEKPS) and 468-535 (VHLD…CSSL). The span at 24 to 34 (PSGTVSASPSE) shows a compositional bias: polar residues. Basic and acidic residues predominate over residues 472–482 (QPGKEPEEAKD). Residues 502 to 515 (EPEDTEDELGDGLE) show a composition bias toward acidic residues. The TTL domain maps to 599–942 (RRLLRWKMST…VLPNMEDIIS (344 aa)). Residue Ser-686 is modified to Phosphoserine. ATP contacts are provided by residues Lys-716, 722–723 (RG), 744–747 (QRYL), and 757–759 (KFD). Arg-722 contacts a protein. Arg-783 contributes to the L-glutamate binding site. 804 to 805 (TN) lines the ATP pocket. Residues Tyr-806, Ser-807, and Lys-828 each coordinate L-glutamate. Residues Asp-888, Glu-901, and Asn-903 each coordinate Mg(2+). Residues 913–1027 (PLDISIKGQM…RGQFERIFPS (115 aa)) form a c-MTBD region region. Residue Lys-919 coordinates L-glutamate. Over residues 943–960 (SSSSPSSSSGSSTSLPSS) the composition is skewed to low complexity. Disordered stretches follow at residues 943-966 (SSSSPSSSSGSSTSLPSSPRDKCQ) and 1092-1193 (MTTS…AVSS). 2 stretches are compositionally biased toward polar residues: residues 1092-1102 (MTTSKGDGTPN) and 1131-1153 (SQAGLSPISRKTLSSRSNENTSK). The span at 1168–1182 (SGQSSRLSAASASQS) shows a compositional bias: low complexity. Polar residues predominate over residues 1183–1193 (VTDSRLTAVSS).

This sequence belongs to the tubulin--tyrosine ligase family. It depends on Mg(2+) as a cofactor. As to expression, highly expressed in testis. Expressed in brain, heart, kidney, liver, lung, muscle and spleen. In the brain, expressed in ependymal cilia, the cortex and the striatum. Expressed in blastomere.

It is found in the cytoplasm. It localises to the cell projection. The protein resides in the cilium. Its subcellular location is the cytoskeleton. The protein localises to the cilium basal body. It catalyses the reaction L-glutamyl-[protein] + L-glutamate + ATP = gamma-L-glutamyl-L-glutamyl-[protein] + ADP + phosphate + H(+). Its function is as follows. Monoglutamylase which modifies both tubulin and non-tubulin proteins, adding a single glutamate on the gamma-carboxyl group of specific glutamate residues of target proteins. Involved in the side-chain initiation step of the polyglutamylation reaction but not in the elongation step. Preferentially modifies beta-tail tubulin over the alpha-tubulin. Monoglutamylates nucleosome assembly proteins NAP1L1 and NAP1L4. Monoglutamylates nucleotidyltransferase CGAS, leading to inhibition of CGAS catalytic activity, thereby preventing antiviral defense function. Involved in KLF4 glutamylation which impedes its ubiquitination, thereby leading to somatic cell reprogramming, pluripotency maintenance and embryogenesis. This is Tubulin monoglutamylase TTLL4 from Mus musculus (Mouse).